We begin with the raw amino-acid sequence, 367 residues long: Forkhead box protein I1-B (367 aa).

2 disordered regions span residues 1–21 (MNPV…HLPH) and 213–274 (DNGN…PPTV). A DNA-binding region (fork-head) is located at residues 128-222 (RPPYSYSALI…DNGNFRRKRK (95 aa)). A compositionally biased stretch (basic and acidic residues) spans 233–246 (AKRDEDHLNPKGKE). The span at 252 to 274 (TPSSSPEVLSPTGHSKSPSPPTV) shows a compositional bias: polar residues.

As to expression, initially localized to the animal hemisphere (the presumptive ectoderm) of early-mid blastula embryos. Becomes restricted to head placodes, excluding the otic placodes, by the tailbud stages.

It localises to the nucleus. Its function is as follows. Transcription factor. Essential for ventral specification of the early cephalic (head) ectoderm during gastrulation, playing a role in the 'non-neural' versus 'neural' cell fate choice. Binds to DNA via the target sequence 5'-[AG]TAAA[CT]A-3', with 5'-ATAAACA-3' being the preferred binding site. In Xenopus laevis (African clawed frog), this protein is Forkhead box protein I1-B (foxi1-b).